A 284-amino-acid polypeptide reads, in one-letter code: NAD kinase (284 aa).

Catalysis depends on Asp-71, which acts as the Proton acceptor. NAD(+)-binding positions include 71–72 (DG), 144–145 (ND), Asp-174, 185–190 (TAYNLS), and Gln-242.

Belongs to the NAD kinase family. A divalent metal cation is required as a cofactor.

The protein localises to the cytoplasm. The catalysed reaction is NAD(+) + ATP = ADP + NADP(+) + H(+). Involved in the regulation of the intracellular balance of NAD and NADP, and is a key enzyme in the biosynthesis of NADP. Catalyzes specifically the phosphorylation on 2'-hydroxyl of the adenosine moiety of NAD to yield NADP. This is NAD kinase from Sulfurimonas denitrificans (strain ATCC 33889 / DSM 1251) (Thiomicrospira denitrificans (strain ATCC 33889 / DSM 1251)).